The following is a 615-amino-acid chain: Cilia- and flagella-associated protein 52 (615 aa).

WD repeat units lie at residues 54-98 (GHSD…LIHR), 101-142 (LHKV…AICG), 145-184 (CNTN…NKLR), 232-275 (GPAK…AGTK), 320-359 (AHND…ELLR), 362-401 (VPNL…IIFT), 405-444 (AHQK…QTLE), 449-488 (DHKG…RRTS), 490-529 (FANT…AIRI), 533-572 (SDLD…CYFV), and 575-614 (AHSG…TLAD).

It belongs to the CFAP52 family.

The protein localises to the cytoplasm. It is found in the cell projection. Its subcellular location is the cilium. It localises to the flagellum. In terms of biological role, may play a role in cell growth and/or survival. This chain is Cilia- and flagella-associated protein 52, found in Chlamydomonas reinhardtii (Chlamydomonas smithii).